Here is a 668-residue protein sequence, read N- to C-terminus: Neurexin-3-beta (668 aa).

The first 35 residues, 1–35 (MHLRTNPSICPGRRPAWTLWMCSLFWGCIVSSVWS), serve as a signal peptide directing secretion. At 36–593 (SSNVASSASS…EVVRESSSTT (558 aa)) the chain is on the extracellular side. A Laminin G-like domain is found at 84–284 (ATYIFGKSGG…NPNIKINGSV (201 aa)). Positions 510–529 (TASSSTGMVPKLPAGKMNNR) are disordered. Residues 594 to 614 (GMVVGIVAAAALCILILLYAM) traverse the membrane as a helical segment. The Cytoplasmic segment spans residues 615–668 (YKYRNRDEGSYQVDETRNYISNSAQSNGTLMKEKQQSSKSGHKKQKNKDKEYYV). The disordered stretch occupies residues 636 to 668 (NSAQSNGTLMKEKQQSSKSGHKKQKNKDKEYYV).

The protein belongs to the neurexin family. Post-translationally, processed by alpha-secretase leading to the formation of an extracellular soluble protein as well as a C-terminal membrane-embedded fragment (CTF). Proteolysis of these CTFs by gamma-secretase releases intracellular domains (ICDs) and extracellular peptides. As to expression, brain and arteries (at protein level).

It localises to the membrane. Functionally, neuronal cell surface protein that may be involved in cell recognition and cell adhesion. Plays a role in angiogenesis. This is Neurexin-3-beta (NRXN3) from Gallus gallus (Chicken).